The sequence spans 517 residues: Crotonobetaine/carnitine--CoA ligase (517 aa).

Belongs to the ATP-dependent AMP-binding enzyme family.

It catalyses the reaction 4-(trimethylamino)butanoate + ATP + CoA = 4-(trimethylamino)butanoyl-CoA + AMP + diphosphate. It carries out the reaction crotonobetaine + ATP + CoA = crotonobetainyl-CoA + AMP + diphosphate. The catalysed reaction is (R)-carnitine + ATP + CoA = (R)-carnitinyl-CoA + AMP + diphosphate. Its pathway is amine and polyamine metabolism; carnitine metabolism. Functionally, catalyzes the transfer of CoA to carnitine, generating the initial carnitinyl-CoA needed for the CaiB reaction cycle. Also has activity toward crotonobetaine and gamma-butyrobetaine. The chain is Crotonobetaine/carnitine--CoA ligase from Escherichia coli O127:H6 (strain E2348/69 / EPEC).